Consider the following 434-residue polypeptide: Xylose isomerase (434 aa).

Active-site residues include His99 and Asp102. Positions 230, 266, 269, 294, 305, 307, and 337 each coordinate Mg(2+).

This sequence belongs to the xylose isomerase family. As to quaternary structure, homotetramer. Requires Mg(2+) as cofactor.

Its subcellular location is the cytoplasm. The enzyme catalyses alpha-D-xylose = alpha-D-xylulofuranose. This Dinoroseobacter shibae (strain DSM 16493 / NCIMB 14021 / DFL 12) protein is Xylose isomerase.